Here is a 217-residue protein sequence, read N- to C-terminus: Glutathione S-transferase B (217 aa).

Residues 1–87 (PMTLGYWNIR…YIARKHNLCG (87 aa)) form the GST N-terminal domain. Glutathione is bound by residues 6–7 (YW), 45–49 (WLNEK), 58–59 (NL), and 71–72 (QS). The GST C-terminal domain occupies 89 to 207 (TEEETIRMDI…KSSRFLPKPL (119 aa)). Tyr115 provides a ligand contact to substrate.

The protein belongs to the GST superfamily. Mu family. As to quaternary structure, homodimer.

Its subcellular location is the cytoplasm. The catalysed reaction is RX + glutathione = an S-substituted glutathione + a halide anion + H(+). It catalyses the reaction prostaglandin A2 + glutathione = prostaglandin A2-S-(R)-glutathione. It carries out the reaction prostaglandin J2 + glutathione = prostaglandin J2-S-(R)-glutathione. The enzyme catalyses prostaglandin J2 + glutathione = prostaglandin J2-S-(S)-glutathione. The catalysed reaction is prostaglandin A2 + glutathione = prostaglandin A2-S-(S)-glutathione. It catalyses the reaction 11(S)-hydroxy-14(S),15(S)-epoxy-(5Z,8Z,12E)-eicosatrienoate + glutathione = (11S,15S)-dihydroxy-14(R)-S-glutathionyl-(5Z,8Z,12E)-eicosatrienoate. In terms of biological role, conjugation of reduced glutathione to a wide number of exogenous and endogenous hydrophobic electrophiles. Involved in the formation of glutathione conjugates of both prostaglandin A2 (PGA2) and prostaglandin J2 (PGJ2). Participates in the formation of novel hepoxilin regioisomers. This Cavia porcellus (Guinea pig) protein is Glutathione S-transferase B (GSTM1).